Reading from the N-terminus, the 204-residue chain is Large ribosomal subunit protein eL15 (204 aa).

The segment covering 172–182 has biased composition (basic residues); it reads RGLRGRGHLHN. The disordered stretch occupies residues 172-204; it reads RGLRGRGHLHNKAPPSRRANWKRNQTLSLPRYR. Residues 193 to 204 show a composition bias toward polar residues; it reads KRNQTLSLPRYR.

The protein belongs to the eukaryotic ribosomal protein eL15 family.

The protein is Large ribosomal subunit protein eL15 (RPL15) of Petunia hybrida (Petunia).